The sequence spans 297 residues: MLTGLKIAVIGGDARQLEIIRKLTEQQADIYLVGFDQLDHGFTGAVKCNIDEIPFQQIDSIILPVSATTGEGVVSTVFSNEEVVLKQDHLDRTPAHCVIFSGISNAYLENIAAQAKRKLVKLFERDDIAIYNSIPTVEGTIMLAIQHTDYTIHGSQVAVLGLGRTGMTIARTFAALGANVKVGARSSAHLARITEMGLVPFHTDELKEHVKDIDICINTIPSMILNQTVLSSMTPKTLILDLASRPGGTDFKYAEKQGIKALLAPGLPGIVAPKTAGQILANVLSKLLAEIQAEEGK.

Residues 164–165, Arg185, Thr203, 242–244, and 264–267 each bind NADP(+); these read RT, LAS, and APGL.

In terms of assembly, dipicolinate synthase likely consists of DpaA and DpaB, since both proteins are required for DPA synthesis.

The catalysed reaction is (S)-2,3-dihydrodipicolinate + NADP(+) = dipicolinate + NADPH + H(+). Together with DpaB, catalyzes the conversion of dihydrodipicolinate to dipicolinate (DPA), which constitutes up to 10% of the dry weight of the spore. This chain is Dipicolinate synthase subunit A (dpaA), found in Bacillus subtilis (strain 168).